A 232-amino-acid chain; its full sequence is Protein INAPERTURATE POLLEN 1 homolog (232 aa).

In terms of assembly, interacts with LECRKS7/DAF1.

It localises to the cytoplasm. Its function is as follows. Required for pollen aperture formation, male fertility and LECRKS7/DAF1 function. Seems to be involved in operculum protrusion. Participates in the modification of plasma membrane at future aperture sites, possibly by creating close contact between the plasma membrane and callose wall to prevent primexine formation and sporopollenin deposition. The sequence is that of Protein INAPERTURATE POLLEN 1 homolog from Oryza sativa subsp. japonica (Rice).